A 290-amino-acid chain; its full sequence is Malonyl-[acyl-carrier protein] O-methyltransferase (290 aa).

Belongs to the methyltransferase superfamily.

The catalysed reaction is malonyl-[ACP] + S-adenosyl-L-methionine = malonyl-[ACP] methyl ester + S-adenosyl-L-homocysteine. The protein operates within cofactor biosynthesis; biotin biosynthesis. Its function is as follows. Converts the free carboxyl group of a malonyl-thioester to its methyl ester by transfer of a methyl group from S-adenosyl-L-methionine (SAM). It allows to synthesize pimeloyl-ACP via the fatty acid synthetic pathway. This chain is Malonyl-[acyl-carrier protein] O-methyltransferase, found in Gallionella capsiferriformans (strain ES-2) (Gallionella ferruginea capsiferriformans (strain ES-2)).